Consider the following 332-residue polypeptide: 2,3-bisphosphoglycerate-dependent phosphoglycerate mutase 2 (332 aa).

The transit peptide at methionine 1–threonine 48 directs the protein to the chloroplast. Residues arginine 85–asparagine 92, threonine 98–glycine 99, arginine 135, glutamate 189–tyrosine 192, lysine 200, arginine 216–arginine 217, and glycine 260–asparagine 261 each bind substrate. Histidine 86 serves as the catalytic Tele-phosphohistidine intermediate. Glutamate 189 functions as the Proton donor/acceptor in the catalytic mechanism.

It belongs to the phosphoglycerate mutase family. BPG-dependent PGAM subfamily.

The protein resides in the plastid. Its subcellular location is the chloroplast. The enzyme catalyses (2R)-2-phosphoglycerate = (2R)-3-phosphoglycerate. The protein operates within carbohydrate degradation; glycolysis; pyruvate from D-glyceraldehyde 3-phosphate: step 3/5. Its function is as follows. Catalyzes the interconversion of 2-phosphoglycerate and 3-phosphoglycerate. This chain is 2,3-bisphosphoglycerate-dependent phosphoglycerate mutase 2, found in Arabidopsis thaliana (Mouse-ear cress).